The chain runs to 238 residues: Large ribosomal subunit protein uL5c (238 aa).

The protein belongs to the universal ribosomal protein uL5 family. In terms of assembly, part of the 50S ribosomal subunit; contacts the 5S rRNA.

Its subcellular location is the plastid. It localises to the chloroplast. Its function is as follows. Binds 5S rRNA, forms part of the central protuberance of the 50S subunit. The polypeptide is Large ribosomal subunit protein uL5c (rpl5) (Trieres chinensis (Marine centric diatom)).